A 407-amino-acid chain; its full sequence is Aurora kinase (407 aa).

Disordered regions lie at residues 1–43 (MTPT…STSS) and 66–137 (ERQG…TQSK). Composition is skewed to low complexity over residues 31-43 (SASTTSTTASTSS) and 126-136 (STTTTMTSTQS). One can recognise a Protein kinase domain in the interval 147–399 (FDIGRPLGKG…LEGVIAHAWI (253 aa)). ATP is bound by residues Lys-157, Lys-176, and 224-227 (LEYA). Catalysis depends on Asp-272, which acts as the Proton acceptor. Asp-290 provides a ligand contact to ATP.

Belongs to the protein kinase superfamily. Ser/Thr protein kinase family.

It is found in the cytoplasm. Its subcellular location is the cytoskeleton. The protein localises to the spindle. The protein resides in the midbody. It localises to the microtubule organizing center. It is found in the centrosome. Its subcellular location is the nucleus. The protein localises to the chromosome. The protein resides in the centromere. The catalysed reaction is L-seryl-[protein] + ATP = O-phospho-L-seryl-[protein] + ADP + H(+). The enzyme catalyses L-threonyl-[protein] + ATP = O-phospho-L-threonyl-[protein] + ADP + H(+). Its activity is regulated as follows. Cdc2 activity is required for activation. Its function is as follows. Serine/threonine protein kinase that contributes to the regulation of cell cycle progression. Involved in meiotic apparatus formation and polar body extrusion. Contributes to Plk1 activation and phosphorylation of histone H3 at 'Ser-10' during meiosis I. Required for accurate progression of early embryonic M phase. Involved in chromosome alignment and cleavage furrow formation during early embryonic cycles. May be involved in mitotic spindle formation and cytokinesis. The sequence is that of Aurora kinase from Patiria pectinifera (Starfish).